We begin with the raw amino-acid sequence, 165 residues long: Small ribosomal subunit protein bS16 (165 aa).

The disordered stretch occupies residues 84-165; that stretch reads WTHGNNPEKG…EAPAEEAAEG (82 aa). Residues 89–130 are compositionally biased toward basic and acidic residues; that stretch reads NPEKGKPGKKAQERLAERAQREEERKQAEADAKAAAEAEKAA. Residues 131 to 157 show a composition bias toward low complexity; it reads AAEAAAAAAAAPAVEEAPAEEAPAAEA.

The protein belongs to the bacterial ribosomal protein bS16 family.

This chain is Small ribosomal subunit protein bS16, found in Caulobacter vibrioides (strain ATCC 19089 / CIP 103742 / CB 15) (Caulobacter crescentus).